The following is an 847-amino-acid chain: Glucans biosynthesis glucosyltransferase H (847 aa).

The Cytoplasmic portion of the chain corresponds to 1-138 (MNKTTEYIDA…KWRTVGTIRR (138 aa)). The chain crosses the membrane as a helical span at residues 139–156 (YILLILTLAQTVVATWYM). At 157–193 (KTILPYQGWALINPMDMVGQDVWVSFMQLLPYMLQTG) the chain is on the periplasmic side. Residues 194 to 216 (ILILFAVLFCWVSAGFWTALMGF) form a helical membrane-spanning segment. At 217 to 511 (LQLLIGRDKY…LVKGMHPVHR (295 aa)) the chain is on the cytoplasmic side. The helical transmembrane segment at 512 to 534 (AVFLTGVMSYLSAPLWFMFLALS) threads the bilayer. Over 535-567 (TALQVVHALTEPQYFLQPRQLFPVWPQWRPELA) the chain is Periplasmic. The helical transmembrane segment at 568-590 (IALFASTMVLLFLPKLLSILLIW) threads the bilayer. Residues 591–602 (CKGTKEYGGFWR) lie on the Cytoplasmic side of the membrane. Residues 603–625 (VTLSLLLEVLFSVLLAPVRMLFH) form a helical membrane-spanning segment. Over 626–679 (TVFVVSAFLGWEVVWNSPQRDDDSTSWGEAFKRHGSQLLLGLVWAVGMAWLDLR) the chain is Periplasmic. The helical transmembrane segment at 680 to 702 (FLFWLAPIVFSLILSPFVSVISS) threads the bilayer. At 703–847 (RATVGLRTKR…ALRKPDAASQ (145 aa)) the chain is on the cytoplasmic side.

The protein belongs to the glycosyltransferase 2 family. OpgH subfamily.

It is found in the cell inner membrane. It functions in the pathway glycan metabolism; osmoregulated periplasmic glucan (OPG) biosynthesis. Its function is as follows. Involved in the biosynthesis of osmoregulated periplasmic glucans (OPGs). The polypeptide is Glucans biosynthesis glucosyltransferase H (Escherichia coli O6:H1 (strain CFT073 / ATCC 700928 / UPEC)).